The chain runs to 400 residues: Argininosuccinate synthase (400 aa).

Residues 10–18 (AYSGGVDTS) and A38 each bind ATP. Y89 provides a ligand contact to L-citrulline. G119 is an ATP binding site. 3 residues coordinate L-aspartate: T121, N125, and D126. Residue N125 coordinates L-citrulline. R129, S177, S186, E262, and Y274 together coordinate L-citrulline.

It belongs to the argininosuccinate synthase family. Type 1 subfamily. In terms of assembly, homotetramer.

Its subcellular location is the cytoplasm. It carries out the reaction L-citrulline + L-aspartate + ATP = 2-(N(omega)-L-arginino)succinate + AMP + diphosphate + H(+). It participates in amino-acid biosynthesis; L-arginine biosynthesis; L-arginine from L-ornithine and carbamoyl phosphate: step 2/3. The polypeptide is Argininosuccinate synthase (Nostoc sp. (strain PCC 7120 / SAG 25.82 / UTEX 2576)).